The chain runs to 414 residues: 3-aminobutyryl-CoA aminotransferase (414 aa).

Lys-261 carries the post-translational modification N6-(pyridoxal phosphate)lysine.

This sequence belongs to the class-III pyridoxal-phosphate-dependent aminotransferase family. Homodimer. The cofactor is pyridoxal 5'-phosphate.

It catalyses the reaction (3S)-3-aminobutanoyl-CoA + 2-oxoglutarate = acetoacetyl-CoA + L-glutamate. It functions in the pathway amino-acid degradation; L-lysine degradation via acetate pathway. In terms of biological role, 3-aminobutyryl-CoA aminotransferase that acts specifically on coenzyme A (CoA) esters and catalyzes the conversion of 3-aminobutyryl-CoA into acetoacetyl-CoA in an alternative pathway of lysine fermentation. The sequence is that of 3-aminobutyryl-CoA aminotransferase (kat) from Cloacimonas acidaminovorans (strain Evry).